We begin with the raw amino-acid sequence, 104 residues long: ATP-dependent Clp protease adapter protein ClpS (104 aa).

It belongs to the ClpS family. As to quaternary structure, binds to the N-terminal domain of the chaperone ClpA.

Its function is as follows. Involved in the modulation of the specificity of the ClpAP-mediated ATP-dependent protein degradation. The chain is ATP-dependent Clp protease adapter protein ClpS from Bordetella avium (strain 197N).